We begin with the raw amino-acid sequence, 314 residues long: 3'-5' exoribonuclease YhaM (314 aa).

Residues 14-90 constitute a DNA-binding region (OB); the sequence is VDLYLLIKSS…QLKLRNIRPA (77 aa). Residues 163 to 279 enclose the HD domain; it reads HVVSMLNLAK…LHYIDNLDAK (117 aa).

The protein belongs to the YhaM family.

In terms of biological role, shows a 3'-5' exoribonuclease activity. The polypeptide is 3'-5' exoribonuclease YhaM (Bacillus licheniformis (strain ATCC 14580 / DSM 13 / JCM 2505 / CCUG 7422 / NBRC 12200 / NCIMB 9375 / NCTC 10341 / NRRL NRS-1264 / Gibson 46)).